The primary structure comprises 452 residues: CASP-like protein 4A1 (452 aa).

A compositionally biased stretch (basic and acidic residues) spans 1 to 17 (MGLRDSLKEREDRRSSE). 3 disordered regions span residues 1 to 39 (MGLR…RKES), 71 to 147 (RAGP…ARSS), and 164 to 283 (AKYV…VQFR). At 1 to 305 (MGLRDSLKER…KRRAAAMQRT (305 aa)) the chain is on the cytoplasmic side. The segment covering 25–34 (SWMTRESTTG) has biased composition (polar residues). Low complexity-rich tracts occupy residues 105–126 (QAQA…TGSG) and 190–205 (GWYS…AAPP). A compositionally biased stretch (pro residues) spans 211–272 (DPPPAPPRRQ…TAPAPAPVPA (62 aa)). A helical transmembrane segment spans residues 306–326 (ALLARGAAAGLCLAALAVLAA). The Extracellular portion of the chain corresponds to 327 to 347 (DTRKGWARDSYSNYTQFRYSE). N339 carries N-linked (GlcNAc...) asparagine glycosylation. A helical membrane pass occupies residues 348-368 (AVNVIGFIYSVFQFVALVELM). At 369–389 (RRNKHLIPHPKRDLFDFTMDQ) the chain is on the cytoplasmic side. Residues 390–406 (VLTYLLISSSSSATARV) traverse the membrane as a helical segment. Over 407-423 (SDLIDNWGSDPFPSMAN) the chain is Extracellular. N-linked (GlcNAc...) asparagine glycosylation occurs at N423. Residues 424 to 444 (GSIAISFLAFAVFAICSLISA) form a helical membrane-spanning segment. The Cytoplasmic portion of the chain corresponds to 445-452 (YNLFRRDV).

It belongs to the Casparian strip membrane proteins (CASP) family. Homodimer and heterodimers.

The protein resides in the cell membrane. The chain is CASP-like protein 4A1 from Sorghum bicolor (Sorghum).